The sequence spans 263 residues: Ribonuclease HII (263 aa).

The RNase H type-2 domain occupies 71 to 262; that stretch reads QAIAGIDEVG…VKSMCCDSTN (192 aa). A divalent metal cation is bound by residues Asp77, Glu78, and Asp172.

Belongs to the RNase HII family. Mn(2+) is required as a cofactor. The cofactor is Mg(2+).

The protein resides in the cytoplasm. The enzyme catalyses Endonucleolytic cleavage to 5'-phosphomonoester.. In terms of biological role, endonuclease that specifically degrades the RNA of RNA-DNA hybrids. The sequence is that of Ribonuclease HII from Streptococcus pyogenes serotype M3 (strain ATCC BAA-595 / MGAS315).